Consider the following 793-residue polypeptide: Sucrose synthase (793 aa).

The tract at residues 259-738 (MILNIAIISP…AIKRVTEKYS (480 aa)) is GT-B glycosyltransferase.

This sequence belongs to the glycosyltransferase 1 family. In terms of assembly, homotetramer.

The enzyme catalyses an NDP-alpha-D-glucose + D-fructose = a ribonucleoside 5'-diphosphate + sucrose + H(+). In terms of biological role, catalyzes the reversible conversion of sucrose and a nucleotide disphosphate (NDP) into fructose and NDP-glucose; although the reaction is freely reversible in vitro, the physiological reaction seems to be sucrose cleavage. Unlike characterized plant enzymes prefers ADP as a cosubstrate, whereas plants prefer UDP. Its preference for ADP over UDP suggests it may directly link sucrose and glycogen metabolism. The protein is Sucrose synthase of Melioribacter roseus (strain JCM 17771 / P3M-2).